The primary structure comprises 110 residues: UPF0060 membrane protein Psyc_0916 (110 aa).

4 helical membrane-spanning segments follow: residues 7–27 (VGLF…PYLW), 33–53 (SIWL…LLSL), 63–83 (AAYG…VNGI), and 87–107 (TWDI…MFAP).

The protein belongs to the UPF0060 family.

Its subcellular location is the cell inner membrane. This is UPF0060 membrane protein Psyc_0916 from Psychrobacter arcticus (strain DSM 17307 / VKM B-2377 / 273-4).